The sequence spans 247 residues: uncharacterized protein (247 aa).

The next 6 helical transmembrane spans lie at 19 to 39, 73 to 93, 106 to 126, 155 to 175, 196 to 216, and 217 to 237; these read IFFT…SIMF, FFTS…AFFI, FLSF…YFII, YIQF…CPLF, YIYF…ILSQ, and FFLF…SCFY.

This sequence belongs to the TatC family.

It localises to the mitochondrion membrane. This is an uncharacterized protein from Nephroselmis olivacea (Green alga).